A 159-amino-acid polypeptide reads, in one-letter code: MSIEGVLKEGFVTTTADKLINWTRTGSLWPMTFGLACCAVEMMHAGAARYDLDRFGVVFRPSPRQSDVMIVAGTLCNKMAPALRKVYDQMAEPRWVISMGSCANGGGYYHYSYSVVRGCDRIVPVDVYVPGCPPTAEALVYGVIQLQAKIRRTNTIARQ.

[4Fe-4S] cluster-binding residues include cysteine 37, cysteine 38, cysteine 102, and cysteine 132.

This sequence belongs to the complex I 20 kDa subunit family. NDH-1 is composed of 14 different subunits. Subunits NuoB, C, D, E, F, and G constitute the peripheral sector of the complex. The cofactor is [4Fe-4S] cluster.

It localises to the cell inner membrane. The catalysed reaction is a quinone + NADH + 5 H(+)(in) = a quinol + NAD(+) + 4 H(+)(out). Functionally, NDH-1 shuttles electrons from NADH, via FMN and iron-sulfur (Fe-S) centers, to quinones in the respiratory chain. Couples the redox reaction to proton translocation (for every two electrons transferred, four hydrogen ions are translocated across the cytoplasmic membrane), and thus conserves the redox energy in a proton gradient. This chain is NADH-quinone oxidoreductase subunit B, found in Paraburkholderia phymatum (strain DSM 17167 / CIP 108236 / LMG 21445 / STM815) (Burkholderia phymatum).